Consider the following 182-residue polypeptide: Ferritin heavy chain (182 aa).

At methionine 1 the chain carries N-acetylmethionine. N-acetylthreonine; in Ferritin heavy chain, N-terminally processed is present on threonine 2. One can recognise a Ferritin-like diiron domain in the interval 11–160 (QNYHQDSEAA…DHVTNLRRMG (150 aa)). 5 residues coordinate Fe cation: glutamate 28, glutamate 63, histidine 66, glutamate 108, and glutamine 142.

It belongs to the ferritin family. In terms of assembly, oligomer of 24 subunits. There are two types of subunits: L (light) chain and H (heavy) chain. The major chain can be light or heavy, depending on the species and tissue type. The functional molecule forms a roughly spherical shell with a diameter of 12 nm and contains a central cavity into which the insoluble mineral iron core is deposited. Interacts with NCOA4; NCOA4 promotes targeting of the iron-binding ferritin complex to autolysosomes following starvation or iron depletion.

It localises to the cytoplasm. The protein resides in the lysosome. Its subcellular location is the cytoplasmic vesicle. It is found in the autophagosome. The enzyme catalyses 4 Fe(2+) + O2 + 4 H(+) = 4 Fe(3+) + 2 H2O. Its function is as follows. Stores iron in a soluble, non-toxic, readily available form. Important for iron homeostasis. Has ferroxidase activity. Iron is taken up in the ferrous form and deposited as ferric hydroxides after oxidation. Also plays a role in delivery of iron to cells. Mediates iron uptake in capsule cells of the developing kidney. Delivery to lysosomes is mediated by the cargo receptor NCOA4 for autophagic degradation and release of iron. In Equus caballus (Horse), this protein is Ferritin heavy chain (FTH1).